A 432-amino-acid polypeptide reads, in one-letter code: Protein ABHD8 (432 aa).

2 disordered regions span residues 47–69 (KHAG…QGDQ) and 121–149 (PAGS…RPKR). Residues 52–61 (APAPTPPPPL) are compositionally biased toward pro residues. Positions 139–149 (GRRRRARRPKR) are enriched in basic residues. The 103-residue stretch at 170 to 272 (VLFFIHGVGG…HKVIMINGGG (103 aa)) folds into the AB hydrolase-1 domain. Catalysis depends on charge relay system residues S245, D363, and H391.

It belongs to the AB hydrolase superfamily. In terms of assembly, interacts with NLRP3 (via NACHT and LLR domains); this interaction is enhanced in the presence of NLRP3 inflammasome inducers, such as ATP, nigericin, silica, or alum. Interacts with ZDHHC12.

It localises to the cytoplasm. Functionally, negatively regulates NLRP3-driven inflammation. Promotes NLRP3 degradation through the chaperone-mediated autophagy (CMA) pathway, hence attenuating inflammasome activation and IL1B secretion. Acts by recruiting palmitoyltransferase ZDHHC12 to NLRP3, facilitating NLRP3 palmitoylation and subsequent degradation. The sequence is that of Protein ABHD8 from Bos taurus (Bovine).